The chain runs to 471 residues: Pachytene checkpoint protein 2 homolog (471 aa).

Position 213 to 220 (213 to 220 (GPPGTGKT)) interacts with ATP.

It belongs to the AAA ATPase family. PCH2 subfamily.

Plays a key role in chromosome recombination during meiosis. In Oryza sativa subsp. indica (Rice), this protein is Pachytene checkpoint protein 2 homolog.